The chain runs to 545 residues: Leucine-rich repeat LGI family member 2 (545 aa).

The N-terminal stretch at 1 to 28 (MALRRGGCGALGLLLLLLGAACLIPRSA) is a signal peptide. Residues 29-65 (QVRRLARCPATCSCTKESIICVGSSWVPRIVPGDISS) enclose the LRRNT domain. N-linked (GlcNAc...) asparagine glycosylation occurs at Asn70. LRR repeat units follow at residues 86 to 107 (SLQL…AFAG), 110 to 131 (HLEY…AFRG), and 134 to 155 (DLTH…VFSD). One can recognise an LRRCT domain in the interval 167-217 (NKFECDCKAKWLYLWLKMTNSTVSDVLCIGPPEYQEKKLNDVTSFDYECTT). N-linked (GlcNAc...) asparagine glycosylation is present at Asn186. EAR repeat units follow at residues 219-261 (DFVV…EWDH), 265-307 (NFRS…KYDE), 311-358 (KFVK…KWNS), 360-403 (GFYS…QWNK), 407-450 (KFVP…RWNS), 452-494 (QFVE…QWDK), and 498-540 (LFKK…EHII). Asn271 carries an N-linked (GlcNAc...) asparagine glycan. Asn402 carries an N-linked (GlcNAc...) asparagine glycan.

As to expression, brain, heart and placenta.

Its subcellular location is the secreted. Required for the development of soma-targeting inhibitory GABAergic synapses made by parvalbumin-positive basket cells. The chain is Leucine-rich repeat LGI family member 2 (LGI2) from Homo sapiens (Human).